The chain runs to 337 residues: Vegetative-specific protein H5 (337 aa).

The Involved in the stabilization of the negatively charged intermediate by the formation of the oxyanion hole signature appears at 88-90; it reads HGG. Residues Ser-161, Asp-261, and His-291 contribute to the active site.

It belongs to the 'GDXG' lipolytic enzyme family.

This chain is Vegetative-specific protein H5 (cinB), found in Dictyostelium discoideum (Social amoeba).